We begin with the raw amino-acid sequence, 550 residues long: MPPPPKRKWPNRPRGGGGANGSASGTPTTPRSTVAQQPKRPKVEDAAPAAEGVDVKQMYSTSAGNASAKPFSELSSVLDKSLLDGLDKMGFEFMSPVQQKVLTELPSLSSDCVVQAKTGTGKTVAFLLPAIQNLLAGNMPPRGKVAILVVCPTRELALQIAKECNGVTACLPRKMECHTAFGGTSRASNLKAFLNGNPTILVATPGRLDDILGEEHVRERFTHLKTVVLDEADQMLDAGFAPAVKKILRRIPPKSDGWQGMCFSATLPKEVLDIAKIVLFPGFTHLTTVDPNEVPTHERVPQYFLSVPNVGQTFAALSALIQEEHKQDPTDFKAIVFGTTANGVGLLYDLYKHALPQFRVFELHSRMSQPMRTRTTAQFKEATSGILFASDVVGRGMDFPNVGLVVQLGLPSSTEQYVHRVGRTARAGKDGRAVLVLFEKEAFFPRINRTLPIKPYPVDIAAKVPEQEAAITRAFANVEEEAKAKAYQAFLGYNKTFLKKLQLSTTELVRVANEYSRAMGCPEPPLIEKSTIGKMGLKGVPGLNIGSRRH.

Residues 1–11 are compositionally biased toward basic residues; sequence MPPPPKRKWPN. A mitochondrion-targeting transit peptide spans 1–41; it reads MPPPPKRKWPNRPRGGGGANGSASGTPTTPRSTVAQQPKRP. Residues 1–51 form a disordered region; the sequence is MPPPPKRKWPNRPRGGGGANGSASGTPTTPRSTVAQQPKRPKVEDAAPAAE. The Q motif signature appears at 71–99; that stretch reads FSELSSVLDKSLLDGLDKMGFEFMSPVQQ. In terms of domain architecture, Helicase ATP-binding spans 103 to 285; the sequence is TELPSLSSDC…KIVLFPGFTH (183 aa). 116 to 123 contacts ATP; it reads AKTGTGKT. Residues 230 to 233 carry the DEAD box motif; the sequence is DEAD. The Helicase C-terminal domain maps to 316–472; it reads ALSALIQEEH…KVPEQEAAIT (157 aa).

Belongs to the DEAD box helicase family. DDX18/HAS1 subfamily.

The protein localises to the mitochondrion matrix. It carries out the reaction ATP + H2O = ADP + phosphate + H(+). ATP-dependent RNA helicase required for mitochondrial splicing of group I and II introns. Also required for efficient mitochondrial translation. This is ATP-dependent RNA helicase MSS116, mitochondrial (MSS116) from Phaeosphaeria nodorum (strain SN15 / ATCC MYA-4574 / FGSC 10173) (Glume blotch fungus).